A 125-amino-acid chain; its full sequence is Ribosome-binding factor A (125 aa).

This sequence belongs to the RbfA family. Monomer. Binds 30S ribosomal subunits, but not 50S ribosomal subunits or 70S ribosomes.

The protein localises to the cytoplasm. Functionally, one of several proteins that assist in the late maturation steps of the functional core of the 30S ribosomal subunit. Associates with free 30S ribosomal subunits (but not with 30S subunits that are part of 70S ribosomes or polysomes). Required for efficient processing of 16S rRNA. May interact with the 5'-terminal helix region of 16S rRNA. This is Ribosome-binding factor A from Xylella fastidiosa (strain M23).